Consider the following 101-residue polypeptide: Large ribosomal subunit protein uL24 (101 aa).

It belongs to the universal ribosomal protein uL24 family. As to quaternary structure, part of the 50S ribosomal subunit.

Functionally, one of two assembly initiator proteins, it binds directly to the 5'-end of the 23S rRNA, where it nucleates assembly of the 50S subunit. Its function is as follows. One of the proteins that surrounds the polypeptide exit tunnel on the outside of the subunit. The protein is Large ribosomal subunit protein uL24 of Streptococcus thermophilus (strain CNRZ 1066).